The chain runs to 480 residues: MTLSFTARWRDELPATYTALLPTPLKNARLIWYNDELAQQLAIPASLFDATNGAGVWGGETLLPGMSPVAQVYSGHQFGVWAGQLGDGRGILLGEQLLADGSTLDWHLKGAGLTPYSRMGDGRAVLRSTIRESLASEAMHYLGIPTTRALSIVASDTPVQRETQETGAMLMRLAQSHMRFGHFEHFYYRREPEKVQQLADFAIHHYWPQWQDVPEKYALWFEEVAARTGRLIAEWQTVGFSHGVMNTDNMSILGLTIDYGPFGFLDDYDPGFIGNHSDHQGRYRFDNQPSVALWNLQRLAQTLTPFIEIDALNRALDRYQDALLTHYGQRMRQKLGFFTEQKDDNALLNELFSLMAREGSDYTRTFRMLSHTEQQSASSPLRDTFIDRAAFDAWFDRYRARLRTEAVDDALRQQQMQRVNPAVVLRNWLAQRAIDAAEQGDMAELHRLHEVLRQPFTDRDDDYASRPPEWGKRLEVSCSS.

Gly86, Gly88, Arg89, Lys109, Asp121, Gly122, Arg172, and Arg179 together coordinate ATP. Catalysis depends on Asp248, which acts as the Proton acceptor. Mg(2+) is bound by residues Asn249 and Asp258. Position 258 (Asp258) interacts with ATP.

The protein belongs to the SELO family. It depends on Mg(2+) as a cofactor. Requires Mn(2+) as cofactor.

The catalysed reaction is L-seryl-[protein] + ATP = 3-O-(5'-adenylyl)-L-seryl-[protein] + diphosphate. It catalyses the reaction L-threonyl-[protein] + ATP = 3-O-(5'-adenylyl)-L-threonyl-[protein] + diphosphate. The enzyme catalyses L-tyrosyl-[protein] + ATP = O-(5'-adenylyl)-L-tyrosyl-[protein] + diphosphate. It carries out the reaction L-histidyl-[protein] + UTP = N(tele)-(5'-uridylyl)-L-histidyl-[protein] + diphosphate. The catalysed reaction is L-seryl-[protein] + UTP = O-(5'-uridylyl)-L-seryl-[protein] + diphosphate. It catalyses the reaction L-tyrosyl-[protein] + UTP = O-(5'-uridylyl)-L-tyrosyl-[protein] + diphosphate. Nucleotidyltransferase involved in the post-translational modification of proteins. It can catalyze the addition of adenosine monophosphate (AMP) or uridine monophosphate (UMP) to a protein, resulting in modifications known as AMPylation and UMPylation. This chain is Protein nucleotidyltransferase YdiU, found in Salmonella agona (strain SL483).